The following is a 392-amino-acid chain: UPF0229 protein CPF_1540 (392 aa).

The segment at 75–100 (VTTGTGEERRGDRISSDKRKAISNNK) is disordered. The span at 80-94 (GEERRGDRISSDKRK) shows a compositional bias: basic and acidic residues.

This sequence belongs to the UPF0229 family.

The protein is UPF0229 protein CPF_1540 of Clostridium perfringens (strain ATCC 13124 / DSM 756 / JCM 1290 / NCIMB 6125 / NCTC 8237 / Type A).